The chain runs to 353 residues: Putative glycosyltransferase TagX (353 aa).

Belongs to the glycosyltransferase 2 family.

This Staphylococcus aureus (strain COL) protein is Putative glycosyltransferase TagX (tagX).